A 116-amino-acid chain; its full sequence is uncharacterized protein (116 aa).

A helical membrane pass occupies residues Val-89 to Ile-109.

Belongs to the M.jannaschii MJ0023/MJ0349/MJ1072/MJ1074/MJ1107/MJECL16 family.

Its subcellular location is the membrane. This is an uncharacterized protein from Methanocaldococcus jannaschii (strain ATCC 43067 / DSM 2661 / JAL-1 / JCM 10045 / NBRC 100440) (Methanococcus jannaschii).